An 842-amino-acid chain; its full sequence is Glycogen phosphorylase, muscle form (842 aa).

Residue S2 is modified to N-acetylserine. S15 carries the phosphoserine; by PHK; in form phosphorylase A modification. AMP-binding residues include D43 and Y76. A phosphotyrosine mark is found at Y204 and Y227. An AMP-binding site is contributed by 310-319 (RRFKSSKFGC). At S430 the chain carries Phosphoserine. At Y473 the chain carries Phosphotyrosine. K681 is modified (N6-(pyridoxal phosphate)lysine). S747 and S748 each carry phosphoserine.

It belongs to the glycogen phosphorylase family. As to quaternary structure, homodimer. Homotetramer; to form the enzymatically active phosphorylase A. Pyridoxal 5'-phosphate is required as a cofactor. Phosphorylation of Ser-15 converts phosphorylase B (unphosphorylated) to phosphorylase A.

It carries out the reaction [(1-&gt;4)-alpha-D-glucosyl](n) + phosphate = [(1-&gt;4)-alpha-D-glucosyl](n-1) + alpha-D-glucose 1-phosphate. Allosterically regulated through the non-covalent binding of metabolites, being activated by AMP and inhibited by ATP, ADP, and glucose-6-phosphate. The activity is also controlled by post-translational modifications including phosphorylation. In terms of biological role, allosteric enzyme that catalyzes the rate-limiting step in glycogen catabolism, the phosphorolytic cleavage of glycogen to produce glucose-1-phosphate, and plays a central role in maintaining cellular and organismal glucose homeostasis. This is Glycogen phosphorylase, muscle form from Bos taurus (Bovine).